Reading from the N-terminus, the 163-residue chain is NADH-quinone oxidoreductase subunit I (163 aa).

2 consecutive 4Fe-4S ferredoxin-type domains span residues 53-83 and 94-123; these read LRRYPNGEERCIACKLCEAICPAQAITIEAG and VRYDIDMVKCIYCGFCQEACPVDAIVEGPN. [4Fe-4S] cluster contacts are provided by cysteine 63, cysteine 66, cysteine 69, cysteine 73, cysteine 103, cysteine 106, cysteine 109, and cysteine 113.

This sequence belongs to the complex I 23 kDa subunit family. In terms of assembly, NDH-1 is composed of 14 different subunits. Subunits NuoA, H, J, K, L, M, N constitute the membrane sector of the complex. Requires [4Fe-4S] cluster as cofactor.

Its subcellular location is the cell inner membrane. It catalyses the reaction a quinone + NADH + 5 H(+)(in) = a quinol + NAD(+) + 4 H(+)(out). NDH-1 shuttles electrons from NADH, via FMN and iron-sulfur (Fe-S) centers, to quinones in the respiratory chain. The immediate electron acceptor for the enzyme in this species is believed to be ubiquinone. Couples the redox reaction to proton translocation (for every two electrons transferred, four hydrogen ions are translocated across the cytoplasmic membrane), and thus conserves the redox energy in a proton gradient. This is NADH-quinone oxidoreductase subunit I from Allorhizobium ampelinum (strain ATCC BAA-846 / DSM 112012 / S4) (Agrobacterium vitis (strain S4)).